We begin with the raw amino-acid sequence, 209 residues long: Large ribosomal subunit protein uL4 (209 aa).

The tract at residues 46–71 (GTSSTKTRSEVRGSSKKPWKQKGTGR) is disordered. Residues 59–71 (SSKKPWKQKGTGR) are compositionally biased toward basic residues.

It belongs to the universal ribosomal protein uL4 family. Part of the 50S ribosomal subunit.

One of the primary rRNA binding proteins, this protein initially binds near the 5'-end of the 23S rRNA. It is important during the early stages of 50S assembly. It makes multiple contacts with different domains of the 23S rRNA in the assembled 50S subunit and ribosome. In terms of biological role, forms part of the polypeptide exit tunnel. The protein is Large ribosomal subunit protein uL4 of Borreliella afzelii (strain PKo) (Borrelia afzelii).